A 230-amino-acid chain; its full sequence is Ion-translocating oxidoreductase complex subunit E (230 aa).

The next 6 helical transmembrane spans lie at 18–38, 39–59, 63–83, 86–106, 125–145, and 182–202; these read ALVQLLGLCPLLAVTSTATNA, LGLGLATTLVLTLTNLTVSAL, TPAEIRIPIYVMIIASVVSAV, LINAYAFGLYQSLGIFIPLIV, WLSALDGFSIGMGATGAMFVL, and PFLLAMLPPGAFIGLGLMLAV.

The protein belongs to the NqrDE/RnfAE family. The complex is composed of six subunits: RsxA, RsxB, RsxC, RsxD, RsxE and RsxG.

It is found in the cell inner membrane. Part of a membrane-bound complex that couples electron transfer with translocation of ions across the membrane. Required to maintain the reduced state of SoxR. The protein is Ion-translocating oxidoreductase complex subunit E of Salmonella newport (strain SL254).